A 139-amino-acid polypeptide reads, in one-letter code: Small ribosomal subunit protein bS6 (139 aa).

The tract at residues 120–139 is disordered; sequence KGASKVETPTGPESTDIQEK. Positions 130–139 are enriched in polar residues; that stretch reads GPESTDIQEK.

It belongs to the bacterial ribosomal protein bS6 family.

Functionally, binds together with bS18 to 16S ribosomal RNA. The chain is Small ribosomal subunit protein bS6 (rpsF) from Borreliella burgdorferi (strain ATCC 35210 / DSM 4680 / CIP 102532 / B31) (Borrelia burgdorferi).